Reading from the N-terminus, the 780-residue chain is Gelsolin (780 aa).

An N-terminal signal peptide occupies residues 1-25; that stretch reads MAPYCSSLRSALLVLALCALSPSHA. Residues 28–48 are disordered; it reads ASRGRAQERAPQSRVSETRPS. The segment at 51 to 174 is actin-severing; that stretch reads VVEHPEFLKA…YKKGGVASGF (124 aa). The stretch at 74 to 155 is one Gelsolin-like 1 repeat; that stretch reads FDLVPVPPNL…EVQGFESSTF (82 aa). Tyr-84 carries the phosphotyrosine modification. Residues Gly-90, Asp-91, Glu-122, Asp-134, Gly-139, and Ala-141 each coordinate Ca(2+). The interval 121–124 is actin-actin interfilament contact point; it reads DESG. Residue 160–167 coordinates a 1,2-diacyl-sn-glycero-3-phospho-(1D-myo-inositol-4,5-bisphosphate); it reads KSGLKYKK. Val-170 contributes to the Ca(2+) binding site. Position 186 to 194 (186 to 194) interacts with a 1,2-diacyl-sn-glycero-3-phospho-(1D-myo-inositol-4,5-bisphosphate); the sequence is RLFQVKGRR. One copy of the Gelsolin-like 2 repeat lies at 196–268; sequence VRATEVPVSW…SEEGSEPEAM (73 aa). Positions 211 and 212 each coordinate Ca(2+). Cysteines 213 and 226 form a disulfide. Residues Glu-234, Asp-284, Glu-327, Asp-328, and Glu-352 each coordinate Ca(2+). The segment at 244–286 is disordered; sequence GIRDNERSGRAQVHVSEEGSEPEAMLQVLGPKPDLPQGTEDTA. The stretch at 315 to 387 is one Gelsolin-like 3 repeat; it reads DENPFAQSAL…LPEGGETPLF (73 aa). 2 positions are modified to phosphotyrosine: Tyr-407 and Tyr-463. Residues 432 to 780 form an actin-binding, Ca-sensitive region; sequence AAQHGMDDDG…LDRALAELAA (349 aa). One copy of the Gelsolin-like 4 repeat lies at 453 to 534; the sequence is SNKVLVDPAT…VQGKEPAHLM (82 aa). Ca(2+) is bound by residues Gly-469, Asp-470, Glu-500, Asp-512, Gly-517, Pro-519, and Thr-549. One copy of the Gelsolin-like 5 repeat lies at 576–640; it reads AVEVMPKAGA…EEGSEPDGFW (65 aa). Lys-582 is modified (N6-acetyllysine). Ca(2+)-binding residues include Asn-589 and Asp-590. Tyr-601 bears the Phosphotyrosine mark. Position 612 (Glu-612) interacts with Ca(2+). At Tyr-649 the chain carries Phosphotyrosine. The stretch at 679-754 is one Gelsolin-like 6 repeat; the sequence is IEEVPGELMQ…VRQGFEPPSF (76 aa). Ca(2+) contacts are provided by Asp-694, Asp-695, and Glu-717. Thr-740 is subject to Phosphothreonine.

The protein belongs to the villin/gelsolin family. In terms of assembly, binds to actin and to fibronectin. Identified in a complex composed of ACTA1, COBL, GSN and TMSB4X. Interacts with the inactive form of EIF2AK2/PKR. Interacts with FLII. Phosphorylated on tyrosine residues in vitro.

Its subcellular location is the secreted. The protein resides in the cytoplasm. It is found in the cytoskeleton. Functionally, calcium-regulated, actin-modulating protein that binds to the plus (or barbed) ends of actin monomers or filaments, preventing monomer exchange (end-blocking or capping). It can promote the assembly of monomers into filaments (nucleation) as well as sever filaments already formed. Plays a role in ciliogenesis. The chain is Gelsolin (Gsn) from Rattus norvegicus (Rat).